We begin with the raw amino-acid sequence, 294 residues long: Elongation factor Ts (294 aa).

The involved in Mg(2+) ion dislocation from EF-Tu stretch occupies residues 79 to 82 (TDFV).

The protein belongs to the EF-Ts family.

It is found in the cytoplasm. Functionally, associates with the EF-Tu.GDP complex and induces the exchange of GDP to GTP. It remains bound to the aminoacyl-tRNA.EF-Tu.GTP complex up to the GTP hydrolysis stage on the ribosome. The polypeptide is Elongation factor Ts (Shouchella clausii (strain KSM-K16) (Alkalihalobacillus clausii)).